The primary structure comprises 380 residues: MYG1 exonuclease (380 aa).

A mitochondrion-targeting transit peptide spans 1–46 (MGRRFLRGILTLPLRSVLQAQHRMLGSEQDPPAKRPRNNLMAPPRI). 2 positions are modified to N6-acetyllysine: Lys266 and Lys272.

The protein belongs to the MYG1 family. As to expression, ubiquitously expressed, with highest levels in testis.

The protein resides in the nucleus. It localises to the nucleoplasm. Its subcellular location is the mitochondrion matrix. It is found in the nucleolus. 3'-5' RNA exonuclease which cleaves in situ on specific transcripts in both nucleus and mitochondrion. Involved in regulating spatially segregated organellar RNA processing, acts as a coordinator of nucleo-mitochondrial crosstalk. In nucleolus, processes pre-ribosomal RNA involved in ribosome assembly and alters cytoplasmic translation. In mitochondrial matrix, processes 3'-termini of the mito-ribosomal and messenger RNAs and controls translation of mitochondrial proteins. This Mus musculus (Mouse) protein is MYG1 exonuclease.